The sequence spans 357 residues: Phosphoribosylformylglycinamidine cyclo-ligase (357 aa).

It belongs to the AIR synthase family.

The protein localises to the cytoplasm. It carries out the reaction 2-formamido-N(1)-(5-O-phospho-beta-D-ribosyl)acetamidine + ATP = 5-amino-1-(5-phospho-beta-D-ribosyl)imidazole + ADP + phosphate + H(+). It functions in the pathway purine metabolism; IMP biosynthesis via de novo pathway; 5-amino-1-(5-phospho-D-ribosyl)imidazole from N(2)-formyl-N(1)-(5-phospho-D-ribosyl)glycinamide: step 2/2. In Rhizobium etli (strain ATCC 51251 / DSM 11541 / JCM 21823 / NBRC 15573 / CFN 42), this protein is Phosphoribosylformylglycinamidine cyclo-ligase.